The sequence spans 72 residues: Protein kish (72 aa).

The first 26 residues, 1-26 (MVAIFNFQSLLVVILLFICTCTYIRG), serve as a signal peptide directing secretion. Residues 27–47 (SYPSLLEVRDKHSFSGLPRKA) are Extracellular-facing. Residues 48–68 (AIIGERLSPWVSACCLIMGLW) traverse the membrane as a helical segment. Over 69-72 (TLYN) the chain is Cytoplasmic.

It belongs to the KISH family.

Its subcellular location is the golgi apparatus membrane. Involved in the early part of the secretory pathway. This Dictyostelium discoideum (Social amoeba) protein is Protein kish (tmem167).